A 124-amino-acid chain; its full sequence is Holo-[acyl-carrier-protein] synthase (124 aa).

Residues Asp8 and Glu56 each coordinate Mg(2+).

Belongs to the P-Pant transferase superfamily. AcpS family. Mg(2+) is required as a cofactor.

Its subcellular location is the cytoplasm. The catalysed reaction is apo-[ACP] + CoA = holo-[ACP] + adenosine 3',5'-bisphosphate + H(+). Transfers the 4'-phosphopantetheine moiety from coenzyme A to a Ser of acyl-carrier-protein. This is Holo-[acyl-carrier-protein] synthase from Nitratidesulfovibrio vulgaris (strain DP4) (Desulfovibrio vulgaris).